Reading from the N-terminus, the 752-residue chain is RNA-directed RNA polymerase catalytic subunit (752 aa).

2 short sequence motifs (nuclear localization signal) span residues 187-195 (IKKKLPAKN) and 203-216 (RIPMKVKDRITRVE). The interval 249-256 (RGFVLVVE) is promoter-binding site. The RdRp catalytic domain maps to 286 to 482 (VAKMLSNCPP…GINMSKKKSY (197 aa)).

The protein belongs to the influenza viruses polymerase PB1 family. As to quaternary structure, influenza RNA polymerase is composed of three subunits: PB1, PB2 and PA. Interacts (via N-terminus) with PA (via C-terminus). Interacts (via C-terminus) with PB2 (via N-terminus); this interaction is essential for transcription initiation. Phosphorylated by host PRKCA.

It is found in the host nucleus. It localises to the host cytoplasm. The enzyme catalyses RNA(n) + a ribonucleoside 5'-triphosphate = RNA(n+1) + diphosphate. In terms of biological role, RNA-dependent RNA polymerase which is responsible for replication and transcription of virus RNA segments. The transcription of viral mRNAs occurs by a unique mechanism called cap-snatching. 5' methylated caps of cellular mRNAs are cleaved after 10-13 nucleotides by PA. In turn, these short capped RNAs are used as primers by PB1 for transcription of viral mRNAs. During virus replication, PB1 initiates RNA synthesis and copy vRNA into complementary RNA (cRNA) which in turn serves as a template for the production of more vRNAs. In Homo sapiens (Human), this protein is RNA-directed RNA polymerase catalytic subunit.